The following is a 591-amino-acid chain: Frizzled-9 (591 aa).

The N-terminal stretch at 1 to 22 (MAVAPLRGALLLWQLLAAGGAA) is a signal peptide. Topologically, residues 23 to 229 (LEIGRFDPER…EVFWSRRDKD (207 aa)) are extracellular. In terms of domain architecture, FZ spans 34-155 (RGAAPCQAVE…NDPHALCMEA (122 aa)). Disulfide bonds link Cys-39–Cys-100, Cys-47–Cys-93, Cys-84–Cys-122, Cys-111–Cys-152, and Cys-115–Cys-139. Asn-53 is a glycosylation site (N-linked (GlcNAc...) asparagine). The segment at 58-172 (PNLLGHTSQG…PAEPHKGLGM (115 aa)) is required for Wnt-activated receptor activity. Asn-158 is a glycosylation site (N-linked (GlcNAc...) asparagine). Residues 230 to 250 (FALVWMAVWSALCFFSTAFTV) form a helical membrane-spanning segment. The Cytoplasmic segment spans residues 251–266 (LTFLLEPHRFQYPERP). Residues 267–287 (IIFLSMCYNVYSLAFLIRAVA) form a helical membrane-spanning segment. The Extracellular segment spans residues 288–315 (GAQSVACDQEAGALYVIQEGLENTGCTL). The chain crosses the membrane as a helical span at residues 316–336 (VFLLLYYFGMASSLWWVVLTL). The Cytoplasmic segment spans residues 337–355 (TWFLAAGKKWGHEAIEAHG). The helical transmembrane segment at 356-376 (SYFHMAAWGLPALKTIVILTL) threads the bilayer. The Extracellular segment spans residues 377-400 (RKVAGDELTGLCYVASTDAAALTG). Residues 401–421 (FVLVPLSGYLVLGSSFLLTGF) form a helical membrane-spanning segment. The Cytoplasmic segment spans residues 422–447 (VALFHIRKIMKTGGTNTEKLEKLMVK). Residues 448-468 (IGVFSILYTVPATCVIVCYVY) traverse the membrane as a helical segment. Over 469–508 (ERLNMDFWRLRATEQPCAAAAGPGGRRDCSLPGGSVPTVA) the chain is Extracellular. The chain crosses the membrane as a helical span at residues 509–529 (VFMLKIFMSLVVGITSGVWVW). Topologically, residues 530-591 (SSKTFQTWQS…DPSLENPTHL (62 aa)) are cytoplasmic. A Lys-Thr-X-X-X-Trp motif, mediates interaction with the PDZ domain of Dvl family members motif is present at residues 532–537 (KTFQTW). Residues 554–591 (ACRAPGSYGRGTHCHYKAPTVVLHMTKTDPSLENPTHL) form a required for CTNNB1 accumulation and TCF transcription factor activity region.

The protein belongs to the G-protein coupled receptor Fz/Smo family. Ubiquitinated by ZNRF3, leading to its degradation by the proteasome. Expressed predominantly in adult and fetal brain, testis, eye, skeletal muscle and kidney. Moderately expressed in pancreas, thyroid, adrenal cortex, small intestine and stomach. Detected in fetal liver and kidney. Expressed in neural progenitor cells.

It is found in the cell membrane. Its function is as follows. Receptor for WNT2 that is coupled to the beta-catenin canonical signaling pathway, which leads to the activation of disheveled proteins, inhibition of GSK-3 kinase, nuclear accumulation of beta-catenin and activation of Wnt target genes. Plays a role in neuromuscular junction (NMJ) assembly by negatively regulating the clustering of acetylcholine receptors (AChR) through the beta-catenin canonical signaling pathway. May play a role in neural progenitor cells (NPCs) viability through the beta-catenin canonical signaling pathway by negatively regulating cell cycle arrest leading to inhibition of neuron apoptotic process. During hippocampal development, regulates neuroblast proliferation and apoptotic cell death. Controls bone formation through non canonical Wnt signaling mediated via ISG15. Positively regulates bone regeneration through non canonical Wnt signaling. The chain is Frizzled-9 (FZD9) from Homo sapiens (Human).